Here is a 101-residue protein sequence, read N- to C-terminus: MAKISMINRDLKRKRLAKKFADKRLSLKKVISSYASSYEEKIEASCKLQKLPRDSSPTRLRNRCEISGRPRGVYCKFGLGRNKLREAAMRGDIPGLRKASW.

This sequence belongs to the universal ribosomal protein uS14 family. In terms of assembly, part of the 30S ribosomal subunit. Contacts proteins S3 and S10.

Functionally, binds 16S rRNA, required for the assembly of 30S particles and may also be responsible for determining the conformation of the 16S rRNA at the A site. The polypeptide is Small ribosomal subunit protein uS14 (Xylella fastidiosa (strain M23)).